The following is a 537-amino-acid chain: ATP synthase subunit beta 1 (537 aa).

164–171 is an ATP binding site; it reads GGAGVGKT. The tract at residues 471-537 is disordered; that stretch reads PKQSATEKNS…ESLEEPQNGR (67 aa). 2 stretches are compositionally biased toward polar residues: residues 473-498 and 507-528; these read QSAT…SPGP and IPSS…AQNE.

This sequence belongs to the ATPase alpha/beta chains family. F-type ATPases have 2 components, CF(1) - the catalytic core - and CF(0) - the membrane proton channel. CF(1) has five subunits: alpha(3), beta(3), gamma(1), delta(1), epsilon(1). CF(0) has three main subunits: a(1), b(2) and c(9-12). The alpha and beta chains form an alternating ring which encloses part of the gamma chain. CF(1) is attached to CF(0) by a central stalk formed by the gamma and epsilon chains, while a peripheral stalk is formed by the delta and b chains.

Its subcellular location is the cell inner membrane. The enzyme catalyses ATP + H2O + 4 H(+)(in) = ADP + phosphate + 5 H(+)(out). Its function is as follows. Produces ATP from ADP in the presence of a proton gradient across the membrane. The catalytic sites are hosted primarily by the beta subunits. This is ATP synthase subunit beta 1 from Pseudoalteromonas atlantica (strain T6c / ATCC BAA-1087).